We begin with the raw amino-acid sequence, 215 residues long: HTH-type transcriptional repressor FabR (215 aa).

Positions 10–70 (KTRRSLVEAA…TMVDESGLML (61 aa)) constitute an HTH tetR-type domain. The H-T-H motif DNA-binding region spans 33–52 (SLREVAREAGIAPTSFYRHF).

As to quaternary structure, homodimer.

It is found in the cytoplasm. Represses the transcription of fabB, involved in unsaturated fatty acid (UFA) biosynthesis. By controlling UFA production, FabR directly influences the physical properties of the membrane bilayer. This Escherichia coli O1:K1 / APEC protein is HTH-type transcriptional repressor FabR.